The following is a 112-amino-acid chain: Large ribosomal subunit protein bL17 (112 aa).

This sequence belongs to the bacterial ribosomal protein bL17 family. As to quaternary structure, part of the 50S ribosomal subunit. Contacts protein L32.

The protein is Large ribosomal subunit protein bL17 of Thermoanaerobacter pseudethanolicus (strain ATCC 33223 / 39E) (Clostridium thermohydrosulfuricum).